The following is a 229-amino-acid chain: ATP synthase subunit a (229 aa).

The next 6 helical transmembrane spans lie at 25-45 (ADAVVYTWLIMIGLVVLSIAA), 82-102 (FFPLVATLALFILVSNLIGLV), 104-124 (GFFPPTANINTTAACAVVVFV), 142-162 (FLGPIAWLAPMMFFIEVIGHL), 181-201 (LVLIIFFGLAPFIVPLPMMLM), and 202-222 (GVLVSFIQAFVFMLLAMIYIQ).

This sequence belongs to the ATPase A chain family. As to quaternary structure, F-type ATPases have 2 components, CF(1) - the catalytic core - and CF(0) - the membrane proton channel. CF(1) has five subunits: alpha(3), beta(3), gamma(1), delta(1), epsilon(1). CF(0) has three main subunits: a(1), b(2) and c(9-12). The alpha and beta chains form an alternating ring which encloses part of the gamma chain. CF(1) is attached to CF(0) by a central stalk formed by the gamma and epsilon chains, while a peripheral stalk is formed by the delta and b chains.

The protein resides in the cell inner membrane. Its function is as follows. Key component of the proton channel; it plays a direct role in the translocation of protons across the membrane. This Citrifermentans bemidjiense (strain ATCC BAA-1014 / DSM 16622 / JCM 12645 / Bem) (Geobacter bemidjiensis) protein is ATP synthase subunit a.